The chain runs to 265 residues: 6-carboxyhexanoate--CoA ligase (265 aa).

It belongs to the BioW family. In terms of assembly, homodimer. It depends on Mg(2+) as a cofactor.

It catalyses the reaction heptanedioate + ATP + CoA = 6-carboxyhexanoyl-CoA + AMP + diphosphate. Its pathway is metabolic intermediate metabolism; pimeloyl-CoA biosynthesis; pimeloyl-CoA from pimelate: step 1/1. In terms of biological role, catalyzes the transformation of pimelate into pimeloyl-CoA with concomitant hydrolysis of ATP to AMP. The chain is 6-carboxyhexanoate--CoA ligase from Syntrophotalea carbinolica (strain DSM 2380 / NBRC 103641 / GraBd1) (Pelobacter carbinolicus).